The sequence spans 258 residues: Phosphate import ATP-binding protein PstB (258 aa).

The region spanning 5–247 (LDLKGVNIYY…EKIFSNPTEK (243 aa)) is the ABC transporter domain. Position 37–44 (37–44 (GASGCGKT)) interacts with ATP.

Belongs to the ABC transporter superfamily. Phosphate importer (TC 3.A.1.7) family. As to quaternary structure, the complex is composed of two ATP-binding proteins (PstB), two transmembrane proteins (PstC and PstA) and a solute-binding protein (PstS).

The protein resides in the cell membrane. It catalyses the reaction phosphate(out) + ATP + H2O = ADP + 2 phosphate(in) + H(+). Part of the ABC transporter complex PstSACB involved in phosphate import. Responsible for energy coupling to the transport system. The polypeptide is Phosphate import ATP-binding protein PstB (Mycobacterium leprae (strain TN)).